Consider the following 95-residue polypeptide: uncharacterized protein (95 aa).

This is an uncharacterized protein from Vaccinia virus (strain Copenhagen) (VACV).